The primary structure comprises 75 residues: Small ribosomal subunit protein bS18 (75 aa).

The protein belongs to the bacterial ribosomal protein bS18 family. As to quaternary structure, part of the 30S ribosomal subunit. Forms a tight heterodimer with protein bS6.

Binds as a heterodimer with protein bS6 to the central domain of the 16S rRNA, where it helps stabilize the platform of the 30S subunit. In Anaplasma marginale (strain St. Maries), this protein is Small ribosomal subunit protein bS18.